The primary structure comprises 284 residues: Signal peptidase I (284 aa).

The helical transmembrane segment at 4–22 (NFPLLLVIAVAVCGALALV) threads the bilayer. Residues 23 to 58 (DLVLFAPRRRAAISSYEGQVNEPDPAVLEKLNKEPL) lie on the Cytoplasmic side of the membrane. Residues 59-77 (LVEYGKSFFPVLFIVLVLR) form a helical membrane-spanning segment. Topologically, residues 78-284 (SFLVEPFQIP…PNFSRVGVIH (207 aa)) are periplasmic. Residues S90 and K145 contribute to the active site.

It belongs to the peptidase S26 family.

It localises to the cell inner membrane. The enzyme catalyses Cleavage of hydrophobic, N-terminal signal or leader sequences from secreted and periplasmic proteins.. This is Signal peptidase I (lepB) from Pseudomonas aeruginosa (strain ATCC 15692 / DSM 22644 / CIP 104116 / JCM 14847 / LMG 12228 / 1C / PRS 101 / PAO1).